The sequence spans 968 residues: RNA polymerase-associated protein RapA (968 aa).

Residues 164–334 (EVGQRHAPRV…FARLRLLDPD (171 aa)) enclose the Helicase ATP-binding domain. 177–184 (DEVGLGKT) serves as a coordination point for ATP. A DEAH box motif is present at residues 280 to 283 (DEAH). The region spanning 490–664 (RVEWLLNYLI…ATPSEQEGLD (175 aa)) is the Helicase C-terminal domain.

It belongs to the SNF2/RAD54 helicase family. RapA subfamily. In terms of assembly, interacts with the RNAP. Has a higher affinity for the core RNAP than for the holoenzyme. Its ATPase activity is stimulated by binding to RNAP.

Transcription regulator that activates transcription by stimulating RNA polymerase (RNAP) recycling in case of stress conditions such as supercoiled DNA or high salt concentrations. Probably acts by releasing the RNAP, when it is trapped or immobilized on tightly supercoiled DNA. Does not activate transcription on linear DNA. Probably not involved in DNA repair. The polypeptide is RNA polymerase-associated protein RapA (Yersinia enterocolitica serotype O:8 / biotype 1B (strain NCTC 13174 / 8081)).